A 170-amino-acid polypeptide reads, in one-letter code: Allophycocyanin subunit beta-18 (170 aa).

Asn-74 is modified (N4-methylasparagine). A (2R,3E)-phycocyanobilin-binding site is contributed by Cys-84.

It belongs to the phycobiliprotein family. In terms of assembly, heterodimer of an alpha and a beta chain. In terms of processing, contains one covalently linked bilin chromophore.

The protein resides in the plastid. The protein localises to the chloroplast thylakoid membrane. Its function is as follows. Light-harvesting photosynthetic bile pigment-protein from the phycobiliprotein complex. Allophycocyanin has a maximum absorption at approximately 650 nanometers. This is Allophycocyanin subunit beta-18 (apcF) from Cyanidium caldarium (Red alga).